We begin with the raw amino-acid sequence, 360 residues long: Probable cinnamyl alcohol dehydrogenase 9 (360 aa).

Cysteine 50 serves as a coordination point for Zn(2+). Threonine 52 is a binding site for NADP(+). The Zn(2+) site is built by histidine 72, glutamate 73, cysteine 103, cysteine 106, cysteine 109, cysteine 117, and cysteine 166. NADP(+) contacts are provided by residues threonine 170, 191-196 (GLGGLG), 214-219 (SSSSTK), threonine 254, glycine 278, and 301-303 (SDV).

Belongs to the zinc-containing alcohol dehydrogenase family. As to quaternary structure, homodimer. Requires Zn(2+) as cofactor. As to expression, expressed in the vasculature of the primary root and elongation regions. Expressed in the hypocotyl, cotyledon veins, vasculature of the first rosette leaves, and hydathodes. In stems, expressed in the vascular cambium, interfascicular cambium, developing xylem, and phloem. Expressed in the entire floral organs at late developing stage, and in the abscission, style and stigmatic regions of siliques and seed funicules.

It catalyses the reaction (E)-cinnamyl alcohol + NADP(+) = (E)-cinnamaldehyde + NADPH + H(+). It functions in the pathway aromatic compound metabolism; phenylpropanoid biosynthesis. Its function is as follows. Involved in lignin biosynthesis. May catalyze the final step specific for the production of lignin monomers, like coniferyl alcohol, sinapyl alcohol and 4-coumaryl alcohol. The chain is Probable cinnamyl alcohol dehydrogenase 9 (CAD9) from Arabidopsis thaliana (Mouse-ear cress).